The sequence spans 50 residues: Metallothionein zym1 (50 aa).

Cys-7, Cys-15, Cys-17, Cys-21, Cys-23, Cys-26, Cys-30, Cys-32, Cys-40, Cys-42, Cys-45, and Cys-47 together coordinate Zn(2+).

The protein belongs to the metallothionein superfamily.

It is found in the cytoplasm. The protein localises to the nucleus. Metallothionein involved in tolerance to zinc and cadmium. Binds four zinc ions. This is Metallothionein zym1 (zym1) from Schizosaccharomyces pombe (strain 972 / ATCC 24843) (Fission yeast).